We begin with the raw amino-acid sequence, 305 residues long: Coenzyme PQQ synthesis protein B (305 aa).

This sequence belongs to the PqqB family.

The protein operates within cofactor biosynthesis; pyrroloquinoline quinone biosynthesis. May be involved in the transport of PQQ or its precursor to the periplasm. The sequence is that of Coenzyme PQQ synthesis protein B from Cupriavidus necator (strain ATCC 17699 / DSM 428 / KCTC 22496 / NCIMB 10442 / H16 / Stanier 337) (Ralstonia eutropha).